Here is a 338-residue protein sequence, read N- to C-terminus: MKVFYDKDCDLSIIQGKKVAIIGYGSQGHAQACNLKDSGVDVTVGLRKGSATVAKAEAHGLKVTDVASAVAAADLVMILTPDEFQSQLYKNEVEPNLKKGATLAFSHGFAIHYNQVVPRADLDVIMIAPKAPGHTVRTEFVKGGGIPDLIAVYQDASGNAKNVALSYASGVGGGRTGIIETTFKDETETDLFGEQAVLCGGTVELVKAGFETLVEAGYAPEMAYFECLHELKLIVDLMYEGGIANMNYSISNNAEYGEYVTGPEVINAESRQAMRNALKRIQDGEYAKMFITEGATGYPSMTAKRRNNAEHGIEVIGEKLRSMMPWIAANKIVDKDKN.

Positions 1-181 constitute a KARI N-terminal Rossmann domain; the sequence is MKVFYDKDCD…GGGRTGIIET (181 aa). Residues 24 to 27, R47, S50, T52, and 82 to 85 each bind NADP(+); these read YGSQ and DEFQ. H107 is a catalytic residue. Residue G133 coordinates NADP(+). Residues 182–327 form the KARI C-terminal knotted domain; it reads TFKDETETDL…EKLRSMMPWI (146 aa). Mg(2+) contacts are provided by D190, E194, E226, and E230. Residue S251 coordinates substrate.

Belongs to the ketol-acid reductoisomerase family. The cofactor is Mg(2+).

The catalysed reaction is (2R)-2,3-dihydroxy-3-methylbutanoate + NADP(+) = (2S)-2-acetolactate + NADPH + H(+). It carries out the reaction (2R,3R)-2,3-dihydroxy-3-methylpentanoate + NADP(+) = (S)-2-ethyl-2-hydroxy-3-oxobutanoate + NADPH + H(+). The protein operates within amino-acid biosynthesis; L-isoleucine biosynthesis; L-isoleucine from 2-oxobutanoate: step 2/4. It participates in amino-acid biosynthesis; L-valine biosynthesis; L-valine from pyruvate: step 2/4. In terms of biological role, involved in the biosynthesis of branched-chain amino acids (BCAA). Catalyzes an alkyl-migration followed by a ketol-acid reduction of (S)-2-acetolactate (S2AL) to yield (R)-2,3-dihydroxy-isovalerate. In the isomerase reaction, S2AL is rearranged via a Mg-dependent methyl migration to produce 3-hydroxy-3-methyl-2-ketobutyrate (HMKB). In the reductase reaction, this 2-ketoacid undergoes a metal-dependent reduction by NADPH to yield (R)-2,3-dihydroxy-isovalerate. The protein is Ketol-acid reductoisomerase (NADP(+)) of Pseudomonas syringae pv. tomato (strain ATCC BAA-871 / DC3000).